The sequence spans 78 residues: Acyl carrier protein (78 aa).

The Carrier domain maps to 2 to 77 (SEIASRVKAI…DAVSYIEEHA (76 aa)). Position 37 is an O-(pantetheine 4'-phosphoryl)serine (Ser37).

This sequence belongs to the acyl carrier protein (ACP) family. Post-translationally, 4'-phosphopantetheine is transferred from CoA to a specific serine of apo-ACP by AcpS. This modification is essential for activity because fatty acids are bound in thioester linkage to the sulfhydryl of the prosthetic group.

It localises to the cytoplasm. The protein operates within lipid metabolism; fatty acid biosynthesis. Carrier of the growing fatty acid chain in fatty acid biosynthesis. The sequence is that of Acyl carrier protein from Bacteroides thetaiotaomicron (strain ATCC 29148 / DSM 2079 / JCM 5827 / CCUG 10774 / NCTC 10582 / VPI-5482 / E50).